We begin with the raw amino-acid sequence, 283 residues long: Fructose-1,6-bisphosphatase class 1 (283 aa).

Mg(2+) contacts are provided by glutamate 67, aspartate 86, leucine 88, and aspartate 89. Substrate contacts are provided by residues 89-92, tyrosine 195, and lysine 225; that span reads DGSS. Mg(2+) is bound at residue glutamate 231.

The protein belongs to the FBPase class 1 family. As to quaternary structure, homotetramer. It depends on Mg(2+) as a cofactor.

The protein localises to the cytoplasm. The catalysed reaction is beta-D-fructose 1,6-bisphosphate + H2O = beta-D-fructose 6-phosphate + phosphate. It participates in carbohydrate biosynthesis; gluconeogenesis. This chain is Fructose-1,6-bisphosphatase class 1, found in Natronomonas pharaonis (strain ATCC 35678 / DSM 2160 / CIP 103997 / JCM 8858 / NBRC 14720 / NCIMB 2260 / Gabara) (Halobacterium pharaonis).